A 215-amino-acid chain; its full sequence is Large ribosomal subunit protein uL16 (215 aa).

It belongs to the universal ribosomal protein uL16 family. As to quaternary structure, component of the large ribosomal subunit.

The protein localises to the cytoplasm. Functionally, component of the large ribosomal subunit. Plays a role in the formation of actively translating ribosomes. Plays a role in the embryonic brain development. This is Large ribosomal subunit protein uL16 from Danio rerio (Zebrafish).